The chain runs to 564 residues: MEEPMAFSSLRGSDRCPADDSLKKYEQSVKLSGIKRDIEELCEAVPQLVNVFKIKDKIGEGTFSSVYLATAQLQEGHEEKIALKHLIPTSHPMRIAAELQCLTVAGGQDNVMGLKYCFRKNDHVVIAMPYLEHESFLDILNSLSFQEVREYMYNLFVALKRIHQFGIVHRDVKPSNFLYNRRLKKYALVDFGLAQGTRDTKIELLKFVQSEAQQEDCSRNKYHGVVGHKGLLSRPAPKTVDQQCTPKTSVKRSYTQVHIKQGKDGKERSVGLSVQRSVFGERNFNIHSSISHESPAEKLIKQSKTVDIISRKLATKKTAISTKAMNSVMRETARSCPAVLTCDCYGSDRVCSVCLSRRQQVAPRAGTPGFRAPEVLTKCPDQTTAIDMWSAGVIFLSLLSGRYPFYKASDDLTALAQIMTIRGSRETIQAAKAFGKSVLCSKEVPAQDLRALCERLRGLDSTTPRSASGPPGNASYDPAASKNTDHKASRVQAAQAQHSEDSLYKRDNDGYWSHPKDCTSNSEGWDSVPDEAYDLLDKLLDLNPASRITAEAALLHAFFKDMCS.

Phosphoserine is present on Ser-21. The Protein kinase domain maps to 52–564 (FKIKDKIGEG…LHAFFKDMCS (513 aa)). ATP contacts are provided by residues 58-66 (IGEGTFSSV) and Lys-84. Asp-171 functions as the Proton acceptor in the catalytic mechanism. A Glycyl lysine isopeptide (Lys-Gly) (interchain with G-Cter in SUMO2) cross-link involves residue Lys-260. Positions 460 to 506 (DSTTPRSASGPPGNASYDPAASKNTDHKASRVQAAQAQHSEDSLYKR) are disordered.

This sequence belongs to the protein kinase superfamily. Ser/Thr protein kinase family. CDC7 subfamily. As to quaternary structure, forms a complex with either DBF4/DBF4A or DBF4B, leading to the activation of the kinase activity. Interacts with CLASPIN (via the acidic patch); the interaction is required for phosphorylation of MCM proteins and CLASPIN. The cofactor is Mg(2+).

Its subcellular location is the nucleus. It carries out the reaction L-seryl-[protein] + ATP = O-phospho-L-seryl-[protein] + ADP + H(+). The catalysed reaction is L-threonyl-[protein] + ATP = O-phospho-L-threonyl-[protein] + ADP + H(+). Kinase involved in initiation of DNA replication. Phosphorylates critical substrates that regulate the G1/S phase transition and initiation of DNA replication, such as MCM proteins and CLASPIN. The sequence is that of Cell division cycle 7-related protein kinase (Cdc7) from Mus musculus (Mouse).